Here is a 677-residue protein sequence, read N- to C-terminus: Secretogranin-1 (677 aa).

Positions 1–20 (MQPAMLLGLLGAAALAAVSS) are cleaved as a signal peptide. The cysteines at positions 36 and 57 are disulfide-linked. 2 disordered regions span residues 63–505 (KSGK…RQYE) and 531–558 (NSDF…VTLT). Over residues 64-90 (SGKEVKGEEKGENQNSKFEVRLLRDPA) the composition is skewed to basic and acidic residues. Phosphoserine occurs at positions 93, 99, and 100. Ser-93 carries an O-linked (Xyl...) (chondroitin sulfate) serine glycan. Residue Thr-115 is glycosylated (O-linked (GalNAc...) threonine). The segment covering 118–133 (GNEKWTEGGGHSREGV) has biased composition (basic and acidic residues). 4 positions are modified to phosphoserine: Ser-129, Ser-147, Ser-190, and Ser-220. 2 stretches are compositionally biased toward basic and acidic residues: residues 148–192 (KEAK…DSGE) and 200–249 (KRSE…KPQE). The O-linked (Xyl...) (chondroitin sulfate) serine glycan is linked to Ser-237. The segment covering 251-280 (TDQDQSQEESQEGEEGEEGEEGEEGEEDSA) has biased composition (acidic residues). Ser-256, Ser-260, Ser-300, Ser-301, Ser-318, and Ser-342 each carry phosphoserine. The segment covering 306-322 (PLSEERRPSPKESKEAD) has biased composition (basic and acidic residues). At Tyr-348 the chain carries Sulfotyrosine. Basic and acidic residues-rich tracts occupy residues 363 to 409 (RGSE…ERSY) and 421 to 455 (GREP…DTAK). A phosphoserine mark is found at Ser-365, Ser-375, and Ser-378. Tyr-472 is modified (sulfotyrosine). Over residues 491–504 (EESREEVRFPDRQY) the composition is skewed to basic and acidic residues. Phosphoserine is present on residues Ser-493, Ser-532, and Ser-543. A sulfotyrosine mark is found at Tyr-566 and Tyr-624. Residues 622–646 (DFYDSEEQMGPHQEANDEKARADQR) form a disordered region. Ser-626 is modified (phosphoserine). Positions 635–646 (EANDEKARADQR) are enriched in basic and acidic residues.

It belongs to the chromogranin/secretogranin protein family. In terms of assembly, interacts with ITPR1 in the secretory granules.

It localises to the secreted. In terms of biological role, secretogranin-1 is a neuroendocrine secretory granule protein, which may be the precursor for other biologically active peptides. In Mus musculus (Mouse), this protein is Secretogranin-1 (Chgb).